We begin with the raw amino-acid sequence, 211 residues long: FMN-dependent NADH:quinone oxidoreductase (211 aa).

17 to 19 contacts FMN; it reads SYS.

The protein belongs to the azoreductase type 1 family. As to quaternary structure, homodimer. Requires FMN as cofactor.

The catalysed reaction is 2 a quinone + NADH + H(+) = 2 a 1,4-benzosemiquinone + NAD(+). It catalyses the reaction N,N-dimethyl-1,4-phenylenediamine + anthranilate + 2 NAD(+) = 2-(4-dimethylaminophenyl)diazenylbenzoate + 2 NADH + 2 H(+). Its function is as follows. Quinone reductase that provides resistance to thiol-specific stress caused by electrophilic quinones. Functionally, also exhibits azoreductase activity. Catalyzes the reductive cleavage of the azo bond in aromatic azo compounds to the corresponding amines. The sequence is that of FMN-dependent NADH:quinone oxidoreductase from Bacillus pumilus (strain SAFR-032).